We begin with the raw amino-acid sequence, 627 residues long: Altered inheritance of mitochondria protein 9, mitochondrial (627 aa).

The transit peptide at 1–43 directs the protein to the mitochondrion; sequence MIRYTVAGHSRRCVVGASKRVGAIKCITVAATKRFISNKPNEV.

It belongs to the AIM9 family.

Its subcellular location is the mitochondrion. The chain is Altered inheritance of mitochondria protein 9, mitochondrial (AIM9) from Saccharomyces cerevisiae (strain RM11-1a) (Baker's yeast).